The following is a 123-amino-acid chain: Small ribosomal subunit protein uS12 (123 aa).

At Asp-89 the chain carries 3-methylthioaspartic acid.

The protein belongs to the universal ribosomal protein uS12 family. In terms of assembly, part of the 30S ribosomal subunit. Contacts proteins S8 and S17. May interact with IF1 in the 30S initiation complex.

Functionally, with S4 and S5 plays an important role in translational accuracy. In terms of biological role, interacts with and stabilizes bases of the 16S rRNA that are involved in tRNA selection in the A site and with the mRNA backbone. Located at the interface of the 30S and 50S subunits, it traverses the body of the 30S subunit contacting proteins on the other side and probably holding the rRNA structure together. The combined cluster of proteins S8, S12 and S17 appears to hold together the shoulder and platform of the 30S subunit. The polypeptide is Small ribosomal subunit protein uS12 (Methylobacterium radiotolerans (strain ATCC 27329 / DSM 1819 / JCM 2831 / NBRC 15690 / NCIMB 10815 / 0-1)).